The primary structure comprises 405 residues: Argininosuccinate synthase (405 aa).

Position 12–20 (12–20 (AYSGGLDTS)) interacts with ATP. The L-citrulline site is built by Y90 and S95. G120 provides a ligand contact to ATP. Positions 122, 126, and 127 each coordinate L-aspartate. Residue N126 coordinates L-citrulline. L-citrulline-binding residues include R130, S179, S188, E265, and Y277.

The protein belongs to the argininosuccinate synthase family. Type 1 subfamily. In terms of assembly, homotetramer.

It is found in the cytoplasm. It carries out the reaction L-citrulline + L-aspartate + ATP = 2-(N(omega)-L-arginino)succinate + AMP + diphosphate + H(+). It participates in amino-acid biosynthesis; L-arginine biosynthesis; L-arginine from L-ornithine and carbamoyl phosphate: step 2/3. This Clostridium perfringens (strain 13 / Type A) protein is Argininosuccinate synthase.